A 501-amino-acid polypeptide reads, in one-letter code: Probable cytochrome P450 6t3 (501 aa).

Cys-444 is a binding site for heme.

It belongs to the cytochrome P450 family. It depends on heme as a cofactor.

It localises to the endoplasmic reticulum membrane. The protein resides in the microsome membrane. In terms of biological role, may be involved in the metabolism of insect hormones and in the breakdown of synthetic insecticides. In Drosophila melanogaster (Fruit fly), this protein is Probable cytochrome P450 6t3 (Cyp6t3).